Reading from the N-terminus, the 507-residue chain is Cytochrome P450 7B1 (507 aa).

Transmembrane regions (helical) follow at residues Pro14–Leu34, Ile178–Ile198, and Phe287–Leu307. Cys447 serves as a coordination point for heme.

This sequence belongs to the cytochrome P450 family. Heme serves as cofactor. In terms of tissue distribution, highly expressed in brain structures including the corpus callosum, the anterior commissure and fornix. The hippocampal expression is particularly prominent in the dentate gyrus. Expressed in liver and kidney. The hepatic expression is sexually dimorphic, predominantly detected in male liver while barely detectable in females. Expressed in lymph nodes and spleens, in both lymphoid and stromal compartments. Higher expression is detected in fibroblastic reticular cells, a type of stromal cells in the lymph nodes. Also expressed at high levels in the outer follicle and at the B cell-T cell boundary of splenic germinal centers. Expressed in dendritic cells (DCs) subpopulations being most abundant in CD8-positive DCs.

Its subcellular location is the endoplasmic reticulum membrane. The protein localises to the microsome membrane. The catalysed reaction is 25-hydroxycholesterol + reduced [NADPH--hemoprotein reductase] + O2 = 7alpha,25-dihydroxycholesterol + oxidized [NADPH--hemoprotein reductase] + H2O + H(+). It catalyses the reaction (25R)-cholest-5-ene-3beta,26-diol + reduced [NADPH--hemoprotein reductase] + O2 = (25R)-cholest-5-en-3beta,7alpha,26-triol + oxidized [NADPH--hemoprotein reductase] + H2O + H(+). It carries out the reaction (24S)-hydroxycholesterol + reduced [NADPH--hemoprotein reductase] + O2 = (24S)-7alpha-dihydroxycholesterol + oxidized [NADPH--hemoprotein reductase] + H2O + H(+). The enzyme catalyses (24S)-25-epoxycholesterol + reduced [NADPH--hemoprotein reductase] + O2 = (24S,25)-epoxy-7alpha-hydroxycholesterol + oxidized [NADPH--hemoprotein reductase] + H2O + H(+). The catalysed reaction is (22R)-hydroxycholesterol + reduced [NADPH--hemoprotein reductase] + O2 = (22R,7alpha)-dihydroxycholesterol + oxidized [NADPH--hemoprotein reductase] + H2O + H(+). It catalyses the reaction androst-5-en-3beta,17beta-diol + reduced [NADPH--hemoprotein reductase] + O2 = androst-5-en-3beta,7alpha,17beta-triol + oxidized [NADPH--hemoprotein reductase] + H2O + H(+). It carries out the reaction 5alpha-androstane-3beta,17beta-diol + reduced [NADPH--hemoprotein reductase] + O2 = 5alpha-androstane-3beta,6alpha,17beta-triol + oxidized [NADPH--hemoprotein reductase] + H2O + H(+). The enzyme catalyses 3beta-hydroxyandrost-5-en-17-one + reduced [NADPH--hemoprotein reductase] + O2 = 3beta,7alpha-dihydroxyandrost-5-en-17-one + oxidized [NADPH--hemoprotein reductase] + H2O + H(+). The catalysed reaction is 3beta-hydroxy-5alpha-androstan-17-one + reduced [NADPH--hemoprotein reductase] + O2 = 3beta,7alpha-dihydroxy-5alpha-androstan-17-one + oxidized [NADPH--hemoprotein reductase] + H2O + H(+). It catalyses the reaction pregnenolone + reduced [NADPH--hemoprotein reductase] + O2 = 7alpha-hydroxypregnenolone + oxidized [NADPH--hemoprotein reductase] + H2O + H(+). The protein operates within lipid metabolism; bile acid biosynthesis. Its pathway is steroid hormone biosynthesis. With respect to regulation, inhibited by drugs voriconazole and metyrapone. In terms of biological role, a cytochrome P450 monooxygenase involved in the metabolism of endogenous oxysterols and steroid hormones, including neurosteroids. Mechanistically, uses molecular oxygen inserting one oxygen atom into a substrate, and reducing the second into a water molecule, with two electrons provided by NADPH via cytochrome P450 reductase (CPR; NADPH-ferrihemoprotein reductase). Catalyzes the hydroxylation of carbon hydrogen bonds of steroids with a preference for 7-alpha position. Usually metabolizes steroids carrying a hydroxy group at position 3, functioning as a 3-hydroxy steroid 7-alpha hydroxylase. Hydroxylates oxysterols, including 25-hydroxycholesterol and (25R)-cholest-5-ene-3beta,26-diol toward 7-alpha hydroxy derivatives, which may be transported to the liver and converted to bile acids. Via its product 7-alpha,25-dihydroxycholesterol, a ligand for the chemotactic G protein-coupled receptor GPR183/EBI2, regulates B cell migration in germinal centers of lymphoid organs, thus guiding efficient maturation of plasma B cells and overall antigen-specific humoral immune response. 7-alpha hydroxylates neurosteroids, including 3beta-hydroxyandrost-5-en-17-one (dehydroepiandrosterone) and pregnenolone, both involved in hippocampus-associated memory and learning. Metabolizes androstanoids toward 6- or 7-alpha hydroxy derivatives. The sequence is that of Cytochrome P450 7B1 from Mus musculus (Mouse).